The sequence spans 107 residues: DNA polymerase delta subunit 4 (107 aa).

A PCNA-interaction protein motif (PIP box) motif is present at residues 1–16; it reads MGRKRFITDSYPVVKK. The tract at residues 1 to 40 is disordered; the sequence is MGRKRFITDSYPVVKKREGPPGHSKGELAPELGEDTQSLS. Over residues 15–28 the composition is skewed to basic and acidic residues; it reads KKREGPPGHSKGEL.

The protein belongs to the DNA polymerase delta subunit 4 family. In terms of assembly, component of the tetrameric DNA polymerase delta complex (Pol-delta4), which consists of POLD1/p125, POLD2/p50, POLD3/p66/p68 and POLD4/p12, with POLD1 bearing DNA polymerase and 3' to 5' proofreading exonuclease activities. Within this complex, directly interacts with POLD1 and POLD2. Directly interacts with PCNA, as do POLD1 and POLD3; this interaction stimulates Pol-delta4 polymerase activity. As POLD1 and POLD2, directly interacts with WRNIP1; this interaction stimulates DNA polymerase delta-mediated DNA synthesis, independently of the presence of PCNA, possibly by increasing initiation frequency. Upon genotoxic stress induced by DNA damaging agents or by replication stress, POLD4 is proteolytically degraded and Pol-delta4 is converted into a trimeric form of the complex (Pol-delta3) that has an increased proofreading activity. The DNA polymerase delta complex interacts with POLDIP2; this interaction is probably mediated through direct binding to POLD2. In terms of processing, ubiquitinated; undergoes 'Lys-48'-linked polyubiquitination in response to UV irradiation or treatment with an alkylating agent, leading to proteasomal degradation. This modification is mediated, at least in part, by RNF8. Post-translationally, ubiquitinated; undergoes 'Lys-48'-linked ubiquitination in response to UV irradiation, leading to proteasomal degradation. This modification is partly mediated by RNF8 and by the DCX(DTL) E3 ubiquitin ligase complex (also called CRL4(CDT2)). Efficient degradation requires the presence of PCNA and is required for the inhibition of fork progression after DNA damage.

The protein resides in the nucleus. In terms of biological role, as a component of the tetrameric DNA polymerase delta complex (Pol-delta4), plays a role in high fidelity genome replication and repair. Within this complex, increases the rate of DNA synthesis and decreases fidelity by regulating POLD1 polymerase and proofreading 3' to 5' exonuclease activity. Pol-delta4 participates in Okazaki fragment processing, through both the short flap pathway, as well as a nick translation system. Under conditions of DNA replication stress, required for the repair of broken replication forks through break-induced replication (BIR), a mechanism that may induce segmental genomic duplications of up to 200 kb. Involved in Pol-delta4 translesion synthesis (TLS) of templates carrying O6-methylguanine or abasic sites. Its degradation in response to DNA damage is required for the inhibition of fork progression and cell survival. This is DNA polymerase delta subunit 4 (Pold4) from Mus musculus (Mouse).